The following is a 393-amino-acid chain: MNSSYKSRVFNIISIIMVSMLILSLGAFANNNKAKADSHSKQLEINVKSDKVPQKVKDLAQQQFAGYAKALDKQSNAKTGKYELGEAFKIYKFNGEEDNSYYYPVIKDGKIVYTLTLSPKNKDDLNKSKEDMNYSVKISNFIAKDLDQIKDKNSNITVLTDEKGFYFEEDGKVRLVKATPLPGNVKEKESAKTVSSKLKQELKNTVTPTKVEENEAIQEDQVQYENTLKNFKIREQQFDNSWCAGFSMAALLNATKNTDTYNAHDIMRTLYPEVSEQDLPNCSTFPNQMIEYGKSQGRDIHYQEGVPSYEQVDQLTKDNVGIMILAQSVSQNPNDPHLGHALAVVGNAKINDQEKLIYWNPWDTELSIQDADSSLLHLSFNRDYNWYGSMIGY.

A signal peptide spans 1–36 (MNSSYKSRVFNIISIIMVSMLILSLGAFANNNKAKA). Residues 37–219 (DSHSKQLEIN…KVEENEAIQE (183 aa)) constitute a propeptide that is removed on maturation. Catalysis depends on residues Cys-243, His-340, and Asn-360.

This sequence belongs to the peptidase C47 family. As to quaternary structure, in the cytoplasm, prematurely activated/folded SspB forms a stable non-covalent complex with SspC. In terms of processing, proteolytically cleaved by staphylococcal serine protease (SspA).

It localises to the secreted. With respect to regulation, prematurely activated/folded staphopain B is inhibited by staphostatin B (SspC), which is probably required to protect staphylococcal cytoplasmic proteins from degradation by SspB. Functionally, cysteine protease that plays an important role in the inhibition of host innate immune response. Degrades host elastin, fibrogen, fibronectin and kininogen. Blocks phagocytosis of opsonised S.aureus by neutrophils and monocytes by inducing their death in a proteolytic activity-dependent manner. Decreases surface expression of the 'don't eat me' signal CD31 on neutrophils. Cleaves host galectin-3/LGALS3, thereby inhibiting the neutrophil-activating ability of the lectin. The protein is Staphopain B (sspB) of Staphylococcus aureus (strain MSSA476).